Reading from the N-terminus, the 264-residue chain is Thymidylate synthase (264 aa).

DUMP is bound at residue arginine 21. Histidine 51 serves as a coordination point for (6R)-5,10-methylene-5,6,7,8-tetrahydrofolate. Residue 126-127 coordinates dUMP; sequence RR. Cysteine 146 (nucleophile) is an active-site residue. Residues 166–169, asparagine 177, and 207–209 each bind dUMP; these read RSAD and HLY. A (6R)-5,10-methylene-5,6,7,8-tetrahydrofolate-binding site is contributed by aspartate 169. Residue alanine 263 coordinates (6R)-5,10-methylene-5,6,7,8-tetrahydrofolate.

Belongs to the thymidylate synthase family. Bacterial-type ThyA subfamily. As to quaternary structure, homodimer.

The protein resides in the cytoplasm. The catalysed reaction is dUMP + (6R)-5,10-methylene-5,6,7,8-tetrahydrofolate = 7,8-dihydrofolate + dTMP. Its pathway is pyrimidine metabolism; dTTP biosynthesis. Its function is as follows. Catalyzes the reductive methylation of 2'-deoxyuridine-5'-monophosphate (dUMP) to 2'-deoxythymidine-5'-monophosphate (dTMP) while utilizing 5,10-methylenetetrahydrofolate (mTHF) as the methyl donor and reductant in the reaction, yielding dihydrofolate (DHF) as a by-product. This enzymatic reaction provides an intracellular de novo source of dTMP, an essential precursor for DNA biosynthesis. The polypeptide is Thymidylate synthase (Bartonella henselae (strain ATCC 49882 / DSM 28221 / CCUG 30454 / Houston 1) (Rochalimaea henselae)).